The following is a 331-amino-acid chain: Centriolar satellite-associated tubulin polyglutamylase complex regulator 1 (331 aa).

The tract at residues 1–111 is required for interaction with PCM1; sequence MLSPERLALP…HCLLQLLCPD (111 aa). The tract at residues 1 to 225 is required for interaction with TPGS1, LRRC49, and TTLL1; sequence MLSPERLALP…SCPPPALVKE (225 aa). A required for interaction with TPGS2 region spans residues 112-331; it reads FPLELTQKAA…STEETDESET (220 aa). Residues 292-331 are disordered; sequence SCLPSRTPPRVGSPWKPLHRSRKLDAESDGSTEETDESET. Over residues 318-331 the composition is skewed to acidic residues; sequence ESDGSTEETDESET. Serine 319 is modified (phosphoserine).

It belongs to the CSTPP1 family. In terms of assembly, interacts with PCM1. Interacts with TTLL1, TPGS1, TPGS2 and LRRC49; the interactions link CSTPP1 to the complex TPGC. Binds to alpha-tubulin.

It is found in the cytoplasm. Its subcellular location is the cytoskeleton. The protein localises to the microtubule organizing center. It localises to the centrosome. The protein resides in the centriolar satellite. Regulator of the tubulin polyglutamylase complex (TPGC) that controls cytoskeletal organization, nuclear shape, and cilium disassembly by balancing microtubule and actin assembly. Regulates the assembly and stability of the TPGC and thereby modulates polyglutamylation of the microtubule, which antagonizes MAP4 binding. This is Centriolar satellite-associated tubulin polyglutamylase complex regulator 1 from Mus musculus (Mouse).